Here is a 515-residue protein sequence, read N- to C-terminus: 2,3-bisphosphoglycerate-independent phosphoglycerate mutase (515 aa).

Mn(2+)-binding residues include aspartate 17 and serine 67. Serine 67 functions as the Phosphoserine intermediate in the catalytic mechanism. Substrate-binding positions include histidine 128, arginine 157 to aspartate 158, arginine 190, arginine 196, arginine 262 to arginine 265, and lysine 336. Mn(2+) contacts are provided by aspartate 403, histidine 407, aspartate 444, histidine 445, and histidine 463.

The protein belongs to the BPG-independent phosphoglycerate mutase family. As to quaternary structure, monomer. Mn(2+) serves as cofactor.

The enzyme catalyses (2R)-2-phosphoglycerate = (2R)-3-phosphoglycerate. It participates in carbohydrate degradation; glycolysis; pyruvate from D-glyceraldehyde 3-phosphate: step 3/5. Its function is as follows. Catalyzes the interconversion of 2-phosphoglycerate and 3-phosphoglycerate. The sequence is that of 2,3-bisphosphoglycerate-independent phosphoglycerate mutase from Acinetobacter baylyi (strain ATCC 33305 / BD413 / ADP1).